We begin with the raw amino-acid sequence, 366 residues long: MQPLWLCWALWVLPLASPGAALTGEQLLGSLLRQLQLKEVPTLDRADMEELVIPTHVRAQYVALLQRSHGDRSRGKRFSQSFREVAGRFLALEASTHLLVFGMEQRLPPNSELVQAVLRLFQEPVPKAALHRHGRLSPRSARARVTVEWLRVRDDGSNRTSLIDSRLVSVHESGWKAFDVTEAVNFWQQLSRPRQPLLLQVSVQREHLGPLASGAHKLVRFASQGAPAGLGEPQLELHTLDLGDYGAQGDCDPEAPMTEGTRCCRQEMYIDLQGMKWAENWVLEPPGFLAYECVGTCRQPPEALAFKWPFLGPRQCIASETDSLPMIVSIKEGGRTRPQVVSLPNMRVQKCSCASDGALVPRRLQP.

The first 21 residues, 1–21 (MQPLWLCWALWVLPLASPGAA), serve as a signal peptide directing secretion. Residues 22-76 (LTGEQLLGSLLRQLQLKEVPTLDRADMEELVIPTHVRAQYVALLQRSHGDRSRGK) constitute a propeptide, or 135. A glycan (N-linked (GlcNAc...) asparagine) is linked at N158. 4 disulfides stabilise this stretch: C251/C264, C263/C316, C293/C351, and C297/C353.

It belongs to the TGF-beta family. In terms of processing, the processing of the protein may also occur at the second R-X-X-R site located at AA 132-135. Processing appears to be regulated in a cell-type specific manner.

Its subcellular location is the secreted. Its function is as follows. Required for left-right axis determination as a regulator of LEFTY2 and NODAL. In Homo sapiens (Human), this protein is Left-right determination factor 1 (LEFTY1).